The chain runs to 267 residues: Diacetylchitobiose deacetylase (267 aa).

It belongs to the PIGL family. As to quaternary structure, homohexamer.

Its subcellular location is the cytoplasm. It catalyses the reaction N,N'-diacetylchitobiose + H2O = beta-D-glucosaminyl-(1-&gt;4)-N-acetyl-D-glucosamine + acetate. It functions in the pathway glycan degradation; chitin degradation. Functionally, deacylates the non-reducing end of diacetylchitobiose (GlcNAc2). Can also use N-acetylglucosamine (GlcNAc) and N-acetylchitotriose (GlcNAc3). Probably involved in chitin degradation. This chain is Diacetylchitobiose deacetylase (dac), found in Thermococcus kodakarensis (strain ATCC BAA-918 / JCM 12380 / KOD1) (Pyrococcus kodakaraensis (strain KOD1)).